The chain runs to 24 residues: FLPILASLAAKFGPKLFCLVTKKC.

Cysteines 18 and 24 form a disulfide.

In terms of tissue distribution, expressed by the skin glands.

Its subcellular location is the secreted. Antibacterial activity against Gram-positive bacterium S.aureus and Gram-negative bacterium E.coli. High antifungal activity against C.albicans and a strong hemolytic activity. In Rana boylii (Foothill yellow-legged frog), this protein is Brevinin-1BYa.